Reading from the N-terminus, the 473-residue chain is MQPFVLYNSEQRKKVEFVPRKPGHIDMYVCGMTVYDYCHIGHARVMVAFDYIIRFLRSQGWDVRYIRNITDIDDKIIKRANENNETIQQLTSRFIDAMNEDAAKLGCAEPDEAPKATEYIGEMQNMISTLVDKGSAYPASNGDVYFEVSKFEKYGRLSGRKLEDMQAGASERVDIEVEKKHPFDFVLWKGAKPNEPSWVSPWGNGRPGWHIECSAMSTCCLGNHFDIHGGGSDLTFPHHENEIAQSEASTGEQYVNYWMHVGFINVDGEKMSKSLGNFFTIRDVMEKFHPEVIRYFIVSSHYRSPVNFSDVALKEAKTALTRFYHAFKAYEQVYGQNDSTQKDEQFIERFNIAMRDDFNTPEAIAVLFELNRELNRAVKEQQAEQAAIYYVTLRHLTQILGLVQHDVDEFLKSDIGQEVLSLSDDEIQAMIQQRADAKKAKDFSGADAIRQALLDQGVVLEDTRQGTLWRRAD.

C30 serves as a coordination point for Zn(2+). The 'HIGH' region signature appears at 32–42 (MTVYDYCHIGH). Positions 213, 238, and 242 each coordinate Zn(2+). The 'KMSKS' region signature appears at 270 to 274 (KMSKS). K273 contributes to the ATP binding site.

This sequence belongs to the class-I aminoacyl-tRNA synthetase family. As to quaternary structure, monomer. The cofactor is Zn(2+).

It is found in the cytoplasm. It catalyses the reaction tRNA(Cys) + L-cysteine + ATP = L-cysteinyl-tRNA(Cys) + AMP + diphosphate. In Acinetobacter baylyi (strain ATCC 33305 / BD413 / ADP1), this protein is Cysteine--tRNA ligase.